Here is a 100-residue protein sequence, read N- to C-terminus: Urease subunit gamma (100 aa).

Belongs to the urease gamma subunit family. Heterotrimer of UreA (gamma), UreB (beta) and UreC (alpha) subunits. Three heterotrimers associate to form the active enzyme.

The protein localises to the cytoplasm. The catalysed reaction is urea + 2 H2O + H(+) = hydrogencarbonate + 2 NH4(+). It functions in the pathway nitrogen metabolism; urea degradation; CO(2) and NH(3) from urea (urease route): step 1/1. The sequence is that of Urease subunit gamma from Cyanothece sp. (strain PCC 7425 / ATCC 29141).